The sequence spans 334 residues: Uracil-DNA glycosylase (334 aa).

Residues 1–17 (MKRACSRSPSPRRRPSS) are compositionally biased toward basic residues. Disordered regions lie at residues 1–63 (MKRA…CRSS) and 79–104 (VTFS…AATS). Polar residues predominate over residues 40-50 (GASNDASTETR). Aspartate 178 functions as the Proton acceptor in the catalytic mechanism.

Belongs to the uracil-DNA glycosylase (UDG) superfamily. UNG family.

The protein localises to the host nucleus. It carries out the reaction Hydrolyzes single-stranded DNA or mismatched double-stranded DNA and polynucleotides, releasing free uracil.. Its function is as follows. Excises uracil residues from the DNA which can arise as a result of misincorporation of dUMP residues by DNA polymerase or deamination of cytosines. Therefore may reduce deleterious uracil incorporation into the viral genome, particularly in terminally differentiated cells which lack DNA repair enzymes. The sequence is that of Uracil-DNA glycosylase from Human herpesvirus 1 (strain 17) (HHV-1).